The sequence spans 240 residues: MVRLGVNIDHIATLRQARGVDYPDPVEAAMMAIEAGADGITLHLREDRRHIQDDDVRNLKRKLTVPMNLEMATAEDIIQFAEEIKPEHCCLVPEKREELTTEGGLDVAGQQNTLKKVCARLAKVGIEVSLFIDPEEKQIDAAKAAGAPVIEIHTGHYANAKTDHEHNQQLKRIADAAAYADSLGLTVNAGHGLTIHNVQSIAAIPVINELNIGHSIISRGVLIGLAEAVKEMKTLIAGAQ.

Asn7 contacts 3-amino-2-oxopropyl phosphate. 9–10 contacts 1-deoxy-D-xylulose 5-phosphate; that stretch reads DH. Position 18 (Arg18) interacts with 3-amino-2-oxopropyl phosphate. His43 acts as the Proton acceptor in catalysis. Residues Arg45 and His50 each contribute to the 1-deoxy-D-xylulose 5-phosphate site. Glu70 acts as the Proton acceptor in catalysis. Residue Thr100 coordinates 1-deoxy-D-xylulose 5-phosphate. His191 functions as the Proton donor in the catalytic mechanism. Residues Gly192 and 213–214 contribute to the 3-amino-2-oxopropyl phosphate site; that span reads GH.

It belongs to the PNP synthase family. Homooctamer; tetramer of dimers.

The protein localises to the cytoplasm. The catalysed reaction is 3-amino-2-oxopropyl phosphate + 1-deoxy-D-xylulose 5-phosphate = pyridoxine 5'-phosphate + phosphate + 2 H2O + H(+). Its pathway is cofactor biosynthesis; pyridoxine 5'-phosphate biosynthesis; pyridoxine 5'-phosphate from D-erythrose 4-phosphate: step 5/5. Its function is as follows. Catalyzes the complicated ring closure reaction between the two acyclic compounds 1-deoxy-D-xylulose-5-phosphate (DXP) and 3-amino-2-oxopropyl phosphate (1-amino-acetone-3-phosphate or AAP) to form pyridoxine 5'-phosphate (PNP) and inorganic phosphate. This is Pyridoxine 5'-phosphate synthase from Coxiella burnetii (strain Dugway 5J108-111).